We begin with the raw amino-acid sequence, 294 residues long: ATP synthase gamma chain (294 aa).

The protein belongs to the ATPase gamma chain family. F-type ATPases have 2 components, CF(1) - the catalytic core - and CF(0) - the membrane proton channel. CF(1) has five subunits: alpha(3), beta(3), gamma(1), delta(1), epsilon(1). CF(0) has three main subunits: a, b and c.

The protein resides in the cell inner membrane. Functionally, produces ATP from ADP in the presence of a proton gradient across the membrane. The gamma chain is believed to be important in regulating ATPase activity and the flow of protons through the CF(0) complex. The polypeptide is ATP synthase gamma chain (Nitratiruptor sp. (strain SB155-2)).